Consider the following 155-residue polypeptide: 6,7-dimethyl-8-ribityllumazine synthase (155 aa).

5-amino-6-(D-ribitylamino)uracil is bound by residues phenylalanine 24, 58 to 60 (AFE), and 82 to 84 (AII). 87–88 (AT) contributes to the (2S)-2-hydroxy-3-oxobutyl phosphate binding site. Catalysis depends on histidine 90, which acts as the Proton donor. Phenylalanine 115 contacts 5-amino-6-(D-ribitylamino)uracil. Arginine 129 is a (2S)-2-hydroxy-3-oxobutyl phosphate binding site.

The protein belongs to the DMRL synthase family.

It catalyses the reaction (2S)-2-hydroxy-3-oxobutyl phosphate + 5-amino-6-(D-ribitylamino)uracil = 6,7-dimethyl-8-(1-D-ribityl)lumazine + phosphate + 2 H2O + H(+). It participates in cofactor biosynthesis; riboflavin biosynthesis; riboflavin from 2-hydroxy-3-oxobutyl phosphate and 5-amino-6-(D-ribitylamino)uracil: step 1/2. Catalyzes the formation of 6,7-dimethyl-8-ribityllumazine by condensation of 5-amino-6-(D-ribitylamino)uracil with 3,4-dihydroxy-2-butanone 4-phosphate. This is the penultimate step in the biosynthesis of riboflavin. The chain is 6,7-dimethyl-8-ribityllumazine synthase from Prosthecochloris aestuarii (strain DSM 271 / SK 413).